Reading from the N-terminus, the 423-residue chain is Probable sucrose-phosphatase 3b (423 aa).

This sequence belongs to the sucrose phosphatase family. In terms of assembly, homodimer. Requires Mg(2+) as cofactor.

It catalyses the reaction sucrose 6(F)-phosphate + H2O = sucrose + phosphate. It participates in glycan biosynthesis; sucrose biosynthesis; sucrose from D-fructose 6-phosphate and UDP-alpha-D-glucose: step 2/2. Catalyzes the final step of sucrose synthesis. The protein is Probable sucrose-phosphatase 3b (SPP3B) of Arabidopsis thaliana (Mouse-ear cress).